Reading from the N-terminus, the 430-residue chain is Adenylosuccinate synthetase (430 aa).

Residues G12 to K18 and G40 to T42 contribute to the GTP site. Residue D13 is the Proton acceptor of the active site. Mg(2+) contacts are provided by D13 and G40. IMP contacts are provided by residues D13–K16, N38–H41, T129, R143, Q224, T239, and R303. The Proton donor role is filled by H41. Substrate is bound at residue T299–R305. Residues R305, K331–D333, and S413–G415 contribute to the GTP site.

Belongs to the adenylosuccinate synthetase family. In terms of assembly, homodimer. Mg(2+) is required as a cofactor.

It localises to the cytoplasm. The enzyme catalyses IMP + L-aspartate + GTP = N(6)-(1,2-dicarboxyethyl)-AMP + GDP + phosphate + 2 H(+). It participates in purine metabolism; AMP biosynthesis via de novo pathway; AMP from IMP: step 1/2. Functionally, plays an important role in the de novo pathway of purine nucleotide biosynthesis. Catalyzes the first committed step in the biosynthesis of AMP from IMP. This Ehrlichia chaffeensis (strain ATCC CRL-10679 / Arkansas) protein is Adenylosuccinate synthetase.